The primary structure comprises 101 residues: Small ribosomal subunit protein uS14 (101 aa).

The interval 53-72 (RDAAAVRVRNRDSHDGRPRG) is disordered. The span at 61-70 (RNRDSHDGRP) shows a compositional bias: basic and acidic residues.

This sequence belongs to the universal ribosomal protein uS14 family. Part of the 30S ribosomal subunit. Contacts proteins S3 and S10.

Functionally, binds 16S rRNA, required for the assembly of 30S particles and may also be responsible for determining the conformation of the 16S rRNA at the A site. The protein is Small ribosomal subunit protein uS14 of Corynebacterium glutamicum (strain R).